We begin with the raw amino-acid sequence, 442 residues long: Protein translocase subunit SecF (442 aa).

The tract at residues 1–39 is disordered; it reads MASKAKTGRDDEATSAVELTEATESAVARTDGDSTTDTA. Helical transmembrane passes span 67 to 87, 187 to 207, 218 to 238, 243 to 263, 301 to 321, and 331 to 351; these read WFGVSGAIVAVAIASIVFRGF, ITKKAVIALVVFLVLVALYIT, AITAMLFDLTVTAGVYSLVGF, ATVIGLLTILGFSLYDTVIVF, LIGVLPVLALMVVAVWLLGVG, and LIGIIIGTYSSIFFATPLLVT. A disordered region spans residues 366-442; the sequence is VLKRRNSGSP…PTGKRNAGRR (77 aa). Residues 402 to 432 show a composition bias toward low complexity; sequence QASSQSAPRAAQGSSKPAPGARPVRPVGTRR. A compositionally biased stretch (basic residues) spans 433–442; that stretch reads PTGKRNAGRR.

Belongs to the SecD/SecF family. SecF subfamily. Forms a complex with SecD. Part of the essential Sec protein translocation apparatus which comprises SecA, SecYEG and auxiliary proteins SecDF. Other proteins may also be involved.

Its subcellular location is the cell membrane. Part of the Sec protein translocase complex. Interacts with the SecYEG preprotein conducting channel. SecDF uses the proton motive force (PMF) to complete protein translocation after the ATP-dependent function of SecA. This Mycobacterium tuberculosis (strain ATCC 25618 / H37Rv) protein is Protein translocase subunit SecF.